Consider the following 239-residue polypeptide: Phosducin-like protein 2 (239 aa).

Residues 26–87 are a coiled coil; it reads TEDELFDLIK…IQQMKVEAEL (62 aa). Residues 36–196 enclose the Phosducin domain; sequence EAAEMATEAE…TTVNDIEWQL (161 aa). The segment covering 42-59 has biased composition (basic and acidic residues); sequence TEAEKNEKLENASLKDLK. Disordered stretches follow at residues 42–64 and 212–239; these read TEAE…MEDD and ITLA…DSDD. The thioredoxin fold stretch occupies residues 90-239; the sequence is FGELKEISEP…DESDNSDSDD (150 aa). The span at 214 to 224 shows a compositional bias: basic residues; it reads LARKKSQKSRY. Over residues 230–239 the composition is skewed to acidic residues; the sequence is DESDNSDSDD.

This sequence belongs to the phosducin family.

The chain is Phosducin-like protein 2 (phlp2) from Dictyostelium discoideum (Social amoeba).